The primary structure comprises 250 residues: Probable transcriptional regulatory protein tll0175 (250 aa).

This sequence belongs to the TACO1 family.

It is found in the cytoplasm. This chain is Probable transcriptional regulatory protein tll0175, found in Thermosynechococcus vestitus (strain NIES-2133 / IAM M-273 / BP-1).